The following is a 446-amino-acid chain: tRNA-2-methylthio-N(6)-dimethylallyladenosine synthase (446 aa).

The 118-residue stretch at 3-120 (KKLFIETHGC…LPEMIDAARS (118 aa)) folds into the MTTase N-terminal domain. [4Fe-4S] cluster-binding residues include Cys12, Cys49, Cys83, Cys157, Cys161, and Cys164. The Radical SAM core domain maps to 143–375 (RVDGPTAFVS…QGRIHQQGYE (233 aa)). Residues 378–442 (RRMVGSTQRI…PHSLRGTLIE (65 aa)) form the TRAM domain.

This sequence belongs to the methylthiotransferase family. MiaB subfamily. As to quaternary structure, monomer. Requires [4Fe-4S] cluster as cofactor.

The protein resides in the cytoplasm. The catalysed reaction is N(6)-dimethylallyladenosine(37) in tRNA + (sulfur carrier)-SH + AH2 + 2 S-adenosyl-L-methionine = 2-methylsulfanyl-N(6)-dimethylallyladenosine(37) in tRNA + (sulfur carrier)-H + 5'-deoxyadenosine + L-methionine + A + S-adenosyl-L-homocysteine + 2 H(+). Functionally, catalyzes the methylthiolation of N6-(dimethylallyl)adenosine (i(6)A), leading to the formation of 2-methylthio-N6-(dimethylallyl)adenosine (ms(2)i(6)A) at position 37 in tRNAs that read codons beginning with uridine. The protein is tRNA-2-methylthio-N(6)-dimethylallyladenosine synthase of Pseudomonas paraeruginosa (strain DSM 24068 / PA7) (Pseudomonas aeruginosa (strain PA7)).